The chain runs to 498 residues: ATP synthase subunit beta, chloroplastic (498 aa).

ATP is bound at residue 172–179; the sequence is GGAGVGKT.

This sequence belongs to the ATPase alpha/beta chains family. F-type ATPases have 2 components, CF(1) - the catalytic core - and CF(0) - the membrane proton channel. CF(1) has five subunits: alpha(3), beta(3), gamma(1), delta(1), epsilon(1). CF(0) has four main subunits: a(1), b(1), b'(1) and c(9-12).

It localises to the plastid. The protein resides in the chloroplast thylakoid membrane. It carries out the reaction ATP + H2O + 4 H(+)(in) = ADP + phosphate + 5 H(+)(out). In terms of biological role, produces ATP from ADP in the presence of a proton gradient across the membrane. The catalytic sites are hosted primarily by the beta subunits. In Aristolochia macrophylla (Dutchman's pipe vine), this protein is ATP synthase subunit beta, chloroplastic.